The primary structure comprises 382 residues: Alanine racemase 1 (382 aa).

Catalysis depends on Lys39, which acts as the Proton acceptor; specific for D-alanine. The residue at position 39 (Lys39) is an N6-(pyridoxal phosphate)lysine. Arg138 is a substrate binding site. The Proton acceptor; specific for L-alanine role is filled by Tyr265. Residue Met312 participates in substrate binding.

This sequence belongs to the alanine racemase family. Pyridoxal 5'-phosphate serves as cofactor.

It carries out the reaction L-alanine = D-alanine. Its pathway is amino-acid biosynthesis; D-alanine biosynthesis; D-alanine from L-alanine: step 1/1. Functionally, catalyzes the interconversion of L-alanine and D-alanine. May also act on other amino acids. This is Alanine racemase 1 (alr1) from Staphylococcus aureus (strain N315).